The chain runs to 345 residues: S-adenosylmethionine:tRNA ribosyltransferase-isomerase (345 aa).

Belongs to the QueA family. As to quaternary structure, monomer.

It localises to the cytoplasm. The catalysed reaction is 7-aminomethyl-7-carbaguanosine(34) in tRNA + S-adenosyl-L-methionine = epoxyqueuosine(34) in tRNA + adenine + L-methionine + 2 H(+). The protein operates within tRNA modification; tRNA-queuosine biosynthesis. Its function is as follows. Transfers and isomerizes the ribose moiety from AdoMet to the 7-aminomethyl group of 7-deazaguanine (preQ1-tRNA) to give epoxyqueuosine (oQ-tRNA). The sequence is that of S-adenosylmethionine:tRNA ribosyltransferase-isomerase from Shewanella amazonensis (strain ATCC BAA-1098 / SB2B).